A 230-amino-acid polypeptide reads, in one-letter code: C-reactive protein (230 aa).

The first 19 residues, 1–19 (MEKLLWCLLITISFSQAFG), serve as a signal peptide directing secretion. The Pentraxin (PTX) domain occupies 24–223 (SKQAFVFPGV…DVFIKPQLWP (200 aa)). A disulfide bridge links C55 with C114. Ca(2+) is bound at residue N78. The N-linked (GlcNAc...) asparagine glycan is linked to N147. Ca(2+) is bound by residues E155, Q156, D157, and Q167. C227 and C228 are oxidised to a cystine.

It belongs to the pentraxin family. As to quaternary structure, homopentamer; disulfide-linked. Pentraxin (or pentaxin) have a discoid arrangement of 5 non-covalently bound subunits. Two of the five chains form a dimer linked by two interchain disulfide bonds located in the C-terminal heptapeptide and specific to rat CRP. Interacts with FCN1; may regulate monocyte activation by FCN1. It depends on Ca(2+) as a cofactor. In terms of processing, the last two cysteines are involved either in interchain disulfide bonds or in an intrachain bond. Found in plasma.

It is found in the secreted. Displays several functions associated with host defense: it promotes agglutination, bacterial capsular swelling, phagocytosis and complement fixation through its calcium-dependent binding to phosphorylcholine. Can interact with DNA and histones and may scavenge nuclear material released from damaged circulating cells. This chain is C-reactive protein (Crp), found in Rattus norvegicus (Rat).